A 542-amino-acid chain; its full sequence is Putative cysteine ligase BshC (542 aa).

The stretch at valine 458–glutamate 487 forms a coiled coil.

It belongs to the BshC family.

Functionally, involved in bacillithiol (BSH) biosynthesis. May catalyze the last step of the pathway, the addition of cysteine to glucosamine malate (GlcN-Mal) to generate BSH. This is Putative cysteine ligase BshC from Geobacillus kaustophilus (strain HTA426).